A 450-amino-acid chain; its full sequence is Bifunctional protein GlmU (450 aa).

The tract at residues 1 to 228 is pyrophosphorylase; the sequence is MSTALVILAA…EAQTLGVNSR (228 aa). Residues 8 to 11, lysine 22, glutamine 75, 80 to 81, 103 to 105, glycine 140, glutamate 154, asparagine 169, and asparagine 226 each bind UDP-N-acetyl-alpha-D-glucosamine; these read LAAG, GT, and YGD. Aspartate 105 serves as a coordination point for Mg(2+). Residue asparagine 226 participates in Mg(2+) binding. Positions 229 to 249 are linker; it reads ADLAAADAIFQTRARAELLDL. An N-acetyltransferase region spans residues 250–450; the sequence is GVTLMAPETV…AKKASKQKET (201 aa). Residues arginine 315 and lysine 333 each coordinate UDP-N-acetyl-alpha-D-glucosamine. Histidine 345 serves as the catalytic Proton acceptor. Residues tyrosine 348 and asparagine 359 each coordinate UDP-N-acetyl-alpha-D-glucosamine. Acetyl-CoA contacts are provided by residues alanine 362, 368 to 369, serine 387, threonine 405, and arginine 422; that span reads NY.

It in the N-terminal section; belongs to the N-acetylglucosamine-1-phosphate uridyltransferase family. In the C-terminal section; belongs to the transferase hexapeptide repeat family. In terms of assembly, homotrimer. Mg(2+) serves as cofactor.

It is found in the cytoplasm. It carries out the reaction alpha-D-glucosamine 1-phosphate + acetyl-CoA = N-acetyl-alpha-D-glucosamine 1-phosphate + CoA + H(+). The enzyme catalyses N-acetyl-alpha-D-glucosamine 1-phosphate + UTP + H(+) = UDP-N-acetyl-alpha-D-glucosamine + diphosphate. The protein operates within nucleotide-sugar biosynthesis; UDP-N-acetyl-alpha-D-glucosamine biosynthesis; N-acetyl-alpha-D-glucosamine 1-phosphate from alpha-D-glucosamine 6-phosphate (route II): step 2/2. It functions in the pathway nucleotide-sugar biosynthesis; UDP-N-acetyl-alpha-D-glucosamine biosynthesis; UDP-N-acetyl-alpha-D-glucosamine from N-acetyl-alpha-D-glucosamine 1-phosphate: step 1/1. It participates in bacterial outer membrane biogenesis; LPS lipid A biosynthesis. Functionally, catalyzes the last two sequential reactions in the de novo biosynthetic pathway for UDP-N-acetylglucosamine (UDP-GlcNAc). The C-terminal domain catalyzes the transfer of acetyl group from acetyl coenzyme A to glucosamine-1-phosphate (GlcN-1-P) to produce N-acetylglucosamine-1-phosphate (GlcNAc-1-P), which is converted into UDP-GlcNAc by the transfer of uridine 5-monophosphate (from uridine 5-triphosphate), a reaction catalyzed by the N-terminal domain. The polypeptide is Bifunctional protein GlmU (Ruegeria pomeroyi (strain ATCC 700808 / DSM 15171 / DSS-3) (Silicibacter pomeroyi)).